The sequence spans 545 residues: G-protein coupled receptor 161 (545 aa).

The Extracellular segment spans residues 1-46; sequence MDFVQHALLTASRGALTMSLNSSLSYRKELSNLTATEGGEGGAVSE. N-linked (GlcNAc...) asparagine glycans are attached at residues Asn21 and Asn32. The helical transmembrane segment at 47–67 threads the bilayer; sequence FIAIIIITVLVCLGNLVIVVT. The Cytoplasmic portion of the chain corresponds to 68-80; that stretch reads LYKKSYLLTLSNK. A helical transmembrane segment spans residues 81–101; that stretch reads FVFSLTLSNFLLSVLVLPFVV. Residues 102-117 lie on the Extracellular side of the membrane; it reads TSSIRREWIFGVVWCN. An intrachain disulfide couples Cys116 to Cys194. An N-linked (GlcNAc...) asparagine glycan is attached at Asn117. A helical membrane pass occupies residues 118-139; it reads FSALLYLLISSASMLTLGVIAI. Residues 140-159 are Cytoplasmic-facing; that stretch reads DRYYAVLYPMVYPMKITGNR. Residues 160–180 traverse the membrane as a helical segment; it reads AVMALVYIWLHSLIGCLPPLF. The Extracellular portion of the chain corresponds to 181-205; that stretch reads GWSSVEFDEFKWMCVAAWHQEPGYT. Residues 206-226 traverse the membrane as a helical segment; sequence IFWQIWCALFPFLIMLVCYGF. Residues 227 to 285 are Cytoplasmic-facing; sequence IFRVARVKARKVHCGTVVTVEEDSQRSGRKNSSTSTSSSGSRRNALQGVVYSANQCKAL. Residues 286–306 traverse the membrane as a helical segment; it reads ITILVVIGAFMVTWGPYMVVI. The Extracellular portion of the chain corresponds to 307–322; it reads TSEALWGKNCVSPTLE. Residues 323–343 form a helical membrane-spanning segment; it reads TWATWLSFTSAICHPLIYGLW. The Cytoplasmic portion of the chain corresponds to 344 to 545; it reads NKTVRKELLG…EGNVLAAEQR (202 aa).

Belongs to the G-protein coupled receptor 1 family.

The protein resides in the cell projection. It localises to the cilium membrane. It is found in the cell membrane. In terms of biological role, key negative regulator of Shh signaling, which promotes the processing of GLI3 into GLI3R during neural tube development. Recruited by TULP3 and the IFT-A complex to primary cilia and acts as a regulator of the PKA-dependent basal repression machinery in Shh signaling by increasing cAMP levels, leading to promote the PKA-dependent processing of GLI3 into GLI3R and repress the Shh signaling. In presence of SHH, it is removed from primary cilia and is internalized into recycling endosomes, preventing its activity and allowing activation of the Shh signaling. Its ligand is unknown. The chain is G-protein coupled receptor 161 (Gpr161) from Mus musculus (Mouse).